The sequence spans 159 residues: GDP-mannose mannosyl hydrolase (159 aa).

Substrate-binding positions include 2 to 3 (FL), Phe-8, and Arg-36. A Nudix hydrolase domain is found at 13-153 (RSTPLVSLDF…SRAYFLAEKR (141 aa)). Mg(2+) is bound by residues Gly-49, Glu-69, and Gln-122. The short motif at 50–71 (GRVQKDETLEAAFERLTMAELG) is the Nudix box element.

As to quaternary structure, homodimer. Mg(2+) is required as a cofactor.

The catalysed reaction is GDP-alpha-D-mannose + H2O = D-mannose + GDP + H(+). Hydrolyzes both GDP-mannose and GDP-glucose. Could participate in the regulation of cell wall biosynthesis by influencing the concentration of GDP-mannose or GDP-glucose in the cell. Might also be involved in the biosynthesis of the slime polysaccharide colanic acid. In Escherichia coli (strain K12), this protein is GDP-mannose mannosyl hydrolase.